A 450-amino-acid polypeptide reads, in one-letter code: FERM domain-containing protein 8 (450 aa).

The FERM domain occupies 28–373 (MDVIVYLIND…YCIELSQTTE (346 aa)).

It localises to the cytoplasm. Its subcellular location is the cytosol. The protein resides in the cell membrane. In terms of biological role, promotes the cell surface stability of RHBDF1 and RHBDF2 and prevents their degradation via the endolysosomal pathway. By acting on RHBDF proteins, involved in ADAM17-mediated ligand shedding. May negatively regulate Wnt signaling. The chain is FERM domain-containing protein 8 (frmd8) from Xenopus tropicalis (Western clawed frog).